Consider the following 431-residue polypeptide: Adenylosuccinate synthetase (431 aa).

GTP-binding positions include 13–19 (GDEGKGK) and 41–43 (GHT). Catalysis depends on aspartate 14, which acts as the Proton acceptor. Mg(2+) is bound by residues aspartate 14 and glycine 41. IMP-binding positions include 14–17 (DEGK), 39–42 (NAGH), threonine 130, arginine 144, glutamine 225, threonine 240, and arginine 304. Catalysis depends on histidine 42, which acts as the Proton donor. 300 to 306 (TTTGRSR) contacts substrate. GTP contacts are provided by residues arginine 306, 332-334 (KLD), and 414-416 (STG).

The protein belongs to the adenylosuccinate synthetase family. As to quaternary structure, homodimer. The cofactor is Mg(2+).

The protein localises to the cytoplasm. It catalyses the reaction IMP + L-aspartate + GTP = N(6)-(1,2-dicarboxyethyl)-AMP + GDP + phosphate + 2 H(+). It functions in the pathway purine metabolism; AMP biosynthesis via de novo pathway; AMP from IMP: step 1/2. In terms of biological role, plays an important role in the de novo pathway of purine nucleotide biosynthesis. Catalyzes the first committed step in the biosynthesis of AMP from IMP. The protein is Adenylosuccinate synthetase of Marinobacter nauticus (strain ATCC 700491 / DSM 11845 / VT8) (Marinobacter aquaeolei).